Here is a 666-residue protein sequence, read N- to C-terminus: Translation factor guf1, mitochondrial (666 aa).

A mitochondrion-targeting transit peptide spans 1 to 43 (MRGCLQLARWLRAAPKCPAASLLKPPSGLANPARFFTTSTACW). The tr-type G domain occupies 68 to 248 (DRYRNFCIVA…TVVEKIPAPV (181 aa)). GTP is bound by residues 77–84 (AHVDHGKS), 141–145 (DTPGH), and 195–198 (NKVD).

It belongs to the TRAFAC class translation factor GTPase superfamily. Classic translation factor GTPase family. LepA subfamily.

It is found in the mitochondrion inner membrane. It catalyses the reaction GTP + H2O = GDP + phosphate + H(+). Its function is as follows. Promotes mitochondrial protein synthesis. May act as a fidelity factor of the translation reaction, by catalyzing a one-codon backward translocation of tRNAs on improperly translocated ribosomes. Binds to mitochondrial ribosomes in a GTP-dependent manner. This Aspergillus niger (strain ATCC MYA-4892 / CBS 513.88 / FGSC A1513) protein is Translation factor guf1, mitochondrial (guf1).